Here is a 339-residue protein sequence, read N- to C-terminus: Tetraacyldisaccharide 4'-kinase (339 aa).

53-60 (TCGGAGKT) lines the ATP pocket.

The protein belongs to the LpxK family.

The enzyme catalyses a lipid A disaccharide + ATP = a lipid IVA + ADP + H(+). Its pathway is glycolipid biosynthesis; lipid IV(A) biosynthesis; lipid IV(A) from (3R)-3-hydroxytetradecanoyl-[acyl-carrier-protein] and UDP-N-acetyl-alpha-D-glucosamine: step 6/6. Functionally, transfers the gamma-phosphate of ATP to the 4'-position of a tetraacyldisaccharide 1-phosphate intermediate (termed DS-1-P) to form tetraacyldisaccharide 1,4'-bis-phosphate (lipid IVA). The polypeptide is Tetraacyldisaccharide 4'-kinase (Bartonella henselae (strain ATCC 49882 / DSM 28221 / CCUG 30454 / Houston 1) (Rochalimaea henselae)).